We begin with the raw amino-acid sequence, 562 residues long: NAD-dependent histone deacetylase SIR2 (562 aa).

Residues 1 to 67 are disordered; sequence MTIPHMKYAV…RETNTTDPLG (67 aa). A compositionally biased stretch (polar residues) spans 11 to 25; it reads SKTSENKVSNTVSPT. Residues 26-36 are compositionally biased toward basic and acidic residues; the sequence is QDKDAIRKQPD. The region spanning 237–527 is the Deacetylase sirtuin-type domain; the sequence is RLSNFFTIDH…AMVAQKCGWT (291 aa). NAD(+) contacts are provided by residues 262-281 and 344-347; these read GAGV…EGFY and QNID. His-364 serves as the catalytic Proton acceptor. Zn(2+) contacts are provided by Cys-372, Cys-375, Cys-396, and Cys-399. NAD(+)-binding positions include 471-473, 496-498, and Cys-513; these read GTS and NRD.

The protein belongs to the sirtuin family. Class I subfamily. As to quaternary structure, homomultimer. Forms a complex with SIR3 and SIR4. Component of the RENT complex, at least composed of SIR2, CDC14 and NET1. The RENT complex interacts with FOB1. Interacts with ESC8. Interacts with and ZDS2. Interacts with MCM10. Interacts with SLX5. Interacts with NSI1. It depends on Zn(2+) as a cofactor.

The protein resides in the nucleus. Its subcellular location is the nucleolus. It carries out the reaction N(6)-acetyl-L-lysyl-[protein] + NAD(+) + H2O = 2''-O-acetyl-ADP-D-ribose + nicotinamide + L-lysyl-[protein]. With respect to regulation, its activity is increased by calorie restriction, which slows the pace of aging and increases maximum lifespan. Activated by resveratrol (3,5,4'-trihydroxy-trans-stilbene), which is found in red wine. In terms of biological role, NAD-dependent deacetylase, which participates in a wide range of cellular events including chromosome silencing, chromosome segregation, DNA recombination and the determination of life span. Involved in transcriptional repression of the silent mating-type loci HML and HMR and telomeric silencing via its association with SIR3 and SIR4. Plays a central role in ribosomal DNA (rDNA) silencing via its association with the RENT complex, preventing hyperrecombination, and repressing transcription from foreign promoters, which contributes to extending life span. Probably represses transcription via the formation of heterochromatin structure, which involves the compaction of chromatin fiber into a more condensed form, although this complex in at least one case can still bind euchromatic levels of positive transcription regulators. Although it displays some NAD-dependent histone deacetylase activity on histone H3K9Ac and H3K14Ac and histone H4K16Ac in vitro, such activity is unclear in vivo and may not be essential. This Saccharomyces cerevisiae (strain ATCC 204508 / S288c) (Baker's yeast) protein is NAD-dependent histone deacetylase SIR2 (SIR2).